A 359-amino-acid chain; its full sequence is NF-kappa-B inhibitor beta (359 aa).

S19 and S23 each carry phosphoserine; by RPS6KA1. 6 ANK repeats span residues 57–86, 93–122, 126–155, 206–235, 240–269, and 273–302; these read DGDTALHLAVIHQHEPFLDFLLGFSAGTEY, LGQTALHLAAILGEASTVEKLYAAGAGVLV, GGHTALHLACRVRAHTCAYVLLQPRPSHPR, DGHTPLHVAVIHKDAEMVQLLRDAGADLNK, CGRTPLHLAVEGQAAGVLALLLKAGADPTA, and GGRTPLGSALLRPNPVLARLLRAHGAPEPE. The tract at residues 153 to 192 is disordered; sequence HPRDASDTYLTQSQDHTPDTSHAPVATDPQPNPGNEEELR. Residues 298–308 show a composition bias toward basic and acidic residues; that stretch reads APEPEDKDDKL. Positions 298–359 are disordered; that stretch reads APEPEDKDDK…KPLPDDPNPA (62 aa). S318 is modified (phosphoserine). A compositionally biased stretch (acidic residues) spans 318 to 331; it reads SDSDNRDEGDEYDD. A compositionally biased stretch (pro residues) spans 342–359; the sequence is QPPPSPAAKPLPDDPNPA.

Belongs to the NF-kappa-B inhibitor family. Interacts with THRB (via ligand-binding domain). Interacts with RELA and REL. Interacts with COMMD1. Interacts with inhibitor kappa B-interacting Ras-like NKIRAS1 and NKIRAS2. Post-translationally, phosphorylated by RPS6KA1; followed by degradation. Interaction with NKIRAS1 and NKIRAS2 probably prevents phosphorylation.

It localises to the cytoplasm. It is found in the nucleus. Functionally, inhibits NF-kappa-B by complexing with and trapping it in the cytoplasm. However, the unphosphorylated form resynthesized after cell stimulation is able to bind NF-kappa-B allowing its transport to the nucleus and protecting it to further NFKBIA-dependent inactivation. Association with inhibitor kappa B-interacting NKIRAS1 and NKIRAS2 prevent its phosphorylation rendering it more resistant to degradation, explaining its slower degradation. In Rattus norvegicus (Rat), this protein is NF-kappa-B inhibitor beta (Nfkbib).